The chain runs to 423 residues: Alpha-1-antichymotrypsin (423 aa).

The N-terminal stretch at 1–23 (MERMLPFLALGLLVAGFCPAVLC) is a signal peptide. N-linked (GlcNAc...) asparagine glycosylation is found at Asn-93, Asn-106, Asn-127, Asn-186, and Asn-271. Residues 369-394 (GTEASAATAVKITLLSALVDPMTIVR) are RCL.

It belongs to the serpin family. In terms of assembly, interacts with DNAJC1. As to expression, plasma.

The protein localises to the secreted. Its function is as follows. Although its physiological function is unclear, it can inhibit neutrophil cathepsin G and mast cell chymase, both of which can convert angiotensin-1 to the active angiotensin-2. The protein is Alpha-1-antichymotrypsin (SERPINA3) of Pongo abelii (Sumatran orangutan).